The chain runs to 1013 residues: Poly [ADP-ribose] polymerase 1 (1013 aa).

2 PARP-type zinc fingers span residues 10–92 and 113–203; these read YKAE…ESGG and FAVE…PAVK. Residues Cys-22, Cys-25, His-54, Cys-57, Cys-125, Cys-128, His-159, and Cys-162 each coordinate Zn(2+). A disordered region spans residues 202–228; the sequence is VKSEGKRKADEVDGGVSKKQKKEDEKL. The Nuclear localization signal signature appears at 207–209; sequence KRK. Residues 219–353 enclose the PADR1 zinc-binding domain; sequence KKQKKEDEKL…FKRQDRVFPK (135 aa). The zinc ribbon stretch occupies residues 284-326; sequence GSLKPCETCKGQLVFKSDAYYCTGDISAWTKCVFKTQTPDRKD. Residues Cys-289, Cys-292, Cys-305, and Cys-315 each contribute to the Zn(2+) site. A disordered region spans residues 353-385; it reads KDAPPAAATPSSGSTTSAATSVSSASKNLTEAP. A compositionally biased stretch (low complexity) spans 356–378; that stretch reads PPAAATPSSGSTTSAATSVSSAS. The automodification domain stretch occupies residues 365-523; that stretch reads GSTTSAATSV…EGGSKSKKMK (159 aa). Positions 385–461 constitute a BRCT domain; it reads PADKPLTGMK…RVVADDFLTD (77 aa). 8 positions are modified to polyADP-ribosyl glutamic acid: Glu-413, Glu-435, Glu-444, Glu-445, Glu-464, Glu-471, Glu-484, and Glu-488. The span at 494-507 shows a compositional bias: low complexity; it reads AATKSTGAHSSKST. Residues 494-522 form a disordered region; sequence AATKSTGAHSSKSTGKVKEEEGGSKSKKM. PolyADP-ribosyl glutamic acid occurs at positions 512 and 513. The region spanning 541–637 is the WGR domain; sequence CAHVLEQNGK…SNFTKYPNKF (97 aa). The 118-residue stretch at 661–778 folds into the PARP alpha-helical domain; sequence KSQLEKPVQD…DIEVAYSLLR (118 aa). Positions 787 to 1013 constitute a PARP catalytic domain; the sequence is DPIDINYEKL…IRFNYQTSLW (227 aa). NAD(+) contacts are provided by residues 861–863, Gly-870, Arg-877, and Ser-903; that span reads HGS. Glu-987 (for poly [ADP-ribose] polymerase activity) is an active-site residue.

It belongs to the ARTD/PARP family. In terms of assembly, homodimer; PARP-type zinc-fingers from separate parp1 molecules form a dimer module that specifically recognizes DNA strand breaks. In terms of processing, poly-ADP-ribosylated on serine, glutamate and aspartate residues by autocatalysis. Auto-ADP-ribosylation on serine takes place following interaction with HPF1. Auto poly-ADP-ribosylation on serine residues promotes its dissociation from chromatin.

The protein resides in the chromosome. The protein localises to the nucleus. Its subcellular location is the nucleolus. It is found in the cytoplasm. It localises to the cytosol. The enzyme catalyses NAD(+) + (ADP-D-ribosyl)n-acceptor = nicotinamide + (ADP-D-ribosyl)n+1-acceptor + H(+).. It catalyses the reaction L-seryl-[protein] + NAD(+) = O-(ADP-D-ribosyl)-L-seryl-[protein] + nicotinamide + H(+). It carries out the reaction L-aspartyl-[protein] + NAD(+) = 4-O-(ADP-D-ribosyl)-L-aspartyl-[protein] + nicotinamide. The catalysed reaction is L-glutamyl-[protein] + NAD(+) = 5-O-(ADP-D-ribosyl)-L-glutamyl-[protein] + nicotinamide. The enzyme catalyses L-tyrosyl-[protein] + NAD(+) = O-(ADP-D-ribosyl)-L-tyrosyl-[protein] + nicotinamide + H(+). It catalyses the reaction L-histidyl-[protein] + NAD(+) = N(tele)-(ADP-D-ribosyl)-L-histidyl-[protein] + nicotinamide + H(+). ADP-ribosyltransferase activity is regulated via an allosteric activation mechanism. In absence of activation signal, parp1 is autoinhibited by the PARP alpha-helical domain (also named HD region), which prevents effective NAD(+)-binding. Activity is highly stimulated by signals, such as DNA strand breaks. Binding to damaged DNA unfolds the PARP alpha-helical domain, relieving autoinhibition. Poly-ADP-ribosyltransferase activity is tightly regulated and parp1 is removed from damaged chromatin following initial poly-ADP-ribosylation of chromatin to avoid prolonged residence (trapping) that has cytotoxic consequences. A number of factors or post-translational modifications (auto-poly-ADP-ribosylation) promote parp1 removal from chromatin. Its function is as follows. Poly-ADP-ribosyltransferase that mediates poly-ADP-ribosylation of proteins and plays a key role in DNA repair. Mediates glutamate, aspartate, serine, histidine or tyrosine ADP-ribosylation of proteins: the ADP-D-ribosyl group of NAD(+) is transferred to the acceptor carboxyl group of target residues and further ADP-ribosyl groups are transferred to the 2'-position of the terminal adenosine moiety, building up a polymer with an average chain length of 20-30 units. Serine ADP-ribosylation of proteins constitutes the primary form of ADP-ribosylation of proteins in response to DNA damage. Specificity for the different amino acids is conferred by interacting factors, such as hpf1 and nmnat1. Following interaction with hpf1, catalyzes serine ADP-ribosylation of target proteins; hpf1 confers serine specificity by completing the parp1 active site. Also catalyzes tyrosine ADP-ribosylation of target proteins following interaction with hpf1. Following interaction with nmnat1, catalyzes glutamate and aspartate ADP-ribosylation of target proteins; nmnat1 confers glutamate and aspartate specificity. Parp1 initiates the repair of DNA breaks: recognizes and binds DNA breaks within chromatin and recruits hpf1, licensing serine ADP-ribosylation of target proteins, such as histones (H2BS6ADPr and H3S10ADPr), thereby promoting decompaction of chromatin and the recruitment of repair factors leading to the reparation of DNA strand breaks. In addition to base excision repair (BER) pathway, also involved in double-strand breaks (DSBs) repair. Mediates the poly-ADP-ribosylation of a number of proteins. In addition to proteins, also able to ADP-ribosylate DNA: catalyzes ADP-ribosylation of DNA strand break termini containing terminal phosphates and a 2'-OH group in single- and double-stranded DNA, respectively. Parp1-mediated DNA repair in neurons plays a role in sleep: senses DNA damage in neurons and promotes sleep, facilitating efficient DNA repair. In addition to DNA repair, also involved in other processes, such as transcription regulation, programmed cell death, membrane repair, adipogenesis and innate immunity. Acts as a repressor of transcription: binds to nucleosomes and modulates chromatin structure in a manner similar to histone H1, thereby altering RNA polymerase II. Acts both as a positive and negative regulator of transcription elongation, depending on the context. Poly-ADP-ribose chains generated by parp1 also play a role in poly-ADP-ribose-dependent cell death, a process named parthanatos. Also acts as a negative regulator of the cGAS-STING pathway by mediating poly-ADP-ribosylation and inactivation of cgas. Acts as a negative regulator of adipogenesis by catalyzing poly ADP-ribosylation of histone H2B on 'Glu-35' (H2BE35ADPr). The protein is Poly [ADP-ribose] polymerase 1 of Danio rerio (Zebrafish).